A 352-amino-acid polypeptide reads, in one-letter code: uncharacterized protein (352 aa).

Residues 1-40 (MTSTMKLFTDHAEISVRERPPQRNNNNQEQDNSNRPAPRR) form a disordered region. Residues 8 to 21 (FTDHAEISVRERPP) are compositionally biased toward basic and acidic residues. The span at 22-36 (QRNNNNQEQDNSNRP) shows a compositional bias: low complexity. Residues 317–333 (MTITLPCGLTIAFFVYY) traverse the membrane as a helical segment.

The protein resides in the host cell membrane. This is an uncharacterized protein from Diadromus pulchellus idnoreovirus 1 (DpIRV-1).